The primary structure comprises 335 residues: Pyridoxal 5'-phosphate synthase subunit PdxS (335 aa).

D30 serves as a coordination point for D-ribose 5-phosphate. K87 (schiff-base intermediate with D-ribose 5-phosphate) is an active-site residue. A D-ribose 5-phosphate-binding site is contributed by G159. R171 is a binding site for D-glyceraldehyde 3-phosphate. D-ribose 5-phosphate contacts are provided by residues G257 and 278–279 (GS).

This sequence belongs to the PdxS/SNZ family. As to quaternary structure, in the presence of PdxT, forms a dodecamer of heterodimers.

It carries out the reaction aldehydo-D-ribose 5-phosphate + D-glyceraldehyde 3-phosphate + L-glutamine = pyridoxal 5'-phosphate + L-glutamate + phosphate + 3 H2O + H(+). Its pathway is cofactor biosynthesis; pyridoxal 5'-phosphate biosynthesis. In terms of biological role, catalyzes the formation of pyridoxal 5'-phosphate from ribose 5-phosphate (RBP), glyceraldehyde 3-phosphate (G3P) and ammonia. The ammonia is provided by the PdxT subunit. Can also use ribulose 5-phosphate and dihydroxyacetone phosphate as substrates, resulting from enzyme-catalyzed isomerization of RBP and G3P, respectively. This Thermococcus gammatolerans (strain DSM 15229 / JCM 11827 / EJ3) protein is Pyridoxal 5'-phosphate synthase subunit PdxS.